A 235-amino-acid chain; its full sequence is Leucyl/phenylalanyl-tRNA--protein transferase (235 aa).

Belongs to the L/F-transferase family.

The protein localises to the cytoplasm. The catalysed reaction is N-terminal L-lysyl-[protein] + L-leucyl-tRNA(Leu) = N-terminal L-leucyl-L-lysyl-[protein] + tRNA(Leu) + H(+). The enzyme catalyses N-terminal L-arginyl-[protein] + L-leucyl-tRNA(Leu) = N-terminal L-leucyl-L-arginyl-[protein] + tRNA(Leu) + H(+). It catalyses the reaction L-phenylalanyl-tRNA(Phe) + an N-terminal L-alpha-aminoacyl-[protein] = an N-terminal L-phenylalanyl-L-alpha-aminoacyl-[protein] + tRNA(Phe). Functions in the N-end rule pathway of protein degradation where it conjugates Leu, Phe and, less efficiently, Met from aminoacyl-tRNAs to the N-termini of proteins containing an N-terminal arginine or lysine. This chain is Leucyl/phenylalanyl-tRNA--protein transferase, found in Azoarcus sp. (strain BH72).